The primary structure comprises 208 residues: MAIFEVKHPLIQHKLGLMRKADQSTKQFRELASEVARLLTYEATKDLETESITITGWAGPVTVQQIKGKKITVVPILRAGLGMMNGVLDMIPSAKVSVVGLYRNEETLEPVAYYEKFASGMEERIALIIDPMLATGGSLLTTIEMLKKTGCRRIKGLFLVAVPEGLERIGRAHPDVEIYVASIDERLNEQGYILPGLGDAGDKIFGTK.

5-phospho-alpha-D-ribose 1-diphosphate contacts are provided by residues Arg78, Arg103, and Asp130–Ser138. Residues Ile193 and Gly198–Ala200 each bind uracil. Residue Asp199 participates in 5-phospho-alpha-D-ribose 1-diphosphate binding.

This sequence belongs to the UPRTase family. The cofactor is Mg(2+).

It carries out the reaction UMP + diphosphate = 5-phospho-alpha-D-ribose 1-diphosphate + uracil. Its pathway is pyrimidine metabolism; UMP biosynthesis via salvage pathway; UMP from uracil: step 1/1. With respect to regulation, allosterically activated by GTP. Its function is as follows. Catalyzes the conversion of uracil and 5-phospho-alpha-D-ribose 1-diphosphate (PRPP) to UMP and diphosphate. The chain is Uracil phosphoribosyltransferase from Pelobacter propionicus (strain DSM 2379 / NBRC 103807 / OttBd1).